Consider the following 298-residue polypeptide: ADP/ATP translocase 1 (298 aa).

The Mitochondrial intermembrane segment spans residues 1-7; it reads MSDQALS. At Ser2 the chain carries N-acetylserine. The Solcar 1 repeat unit spans residues 6–98; it reads LSFLKDFLAG…FAFKDKYKQI (93 aa). Ser7 is modified (phosphoserine). Residues 8–37 form a helical membrane-spanning segment; that stretch reads FLKDFLAGGVAAAISKTAVAPIERVKLLLQ. Residues 38–74 lie on the Mitochondrial matrix side of the membrane; sequence VQHASKQISAEKQYKGIIDCVVRIPKEQGFLSFWRGN. Lys52 is subject to N6,N6,N6-trimethyllysine. At Lys52 the chain carries N6-methyllysine. A helical transmembrane segment spans residues 75 to 99; that stretch reads LANVIRYFPTQALNFAFKDKYKQIF. Residues Arg80 and Lys92 each contribute to the ADP site. Residues 100–109 are Mitochondrial intermembrane-facing; the sequence is LGGVDRHKQF. A helical membrane pass occupies residues 110 to 130; sequence WRYFAGNLASGGAAGATSLCF. Solcar repeat units lie at residues 111–201 and 212–297; these read RYFA…AKGM and VSWM…IKKF. Residues 131–178 lie on the Mitochondrial matrix side of the membrane; sequence VYPLDFARTRLAADVGKGAAQREFTGLGNCITKIFKSDGLRGLYQGFN. Lys147 carries the post-translational modification N6-succinyllysine. Cys160 bears the S-nitrosocysteine mark. The chain crosses the membrane as a helical span at residues 179–199; the sequence is VSVQGIIIYRAAYFGVYDTAK. Residues 200–210 lie on the Mitochondrial intermembrane side of the membrane; it reads GMLPDPKNVHI. Residues 211-231 traverse the membrane as a helical segment; the sequence is IVSWMIAQTVTAVAGLVSYPF. Topologically, residues 232 to 273 are mitochondrial matrix; that stretch reads DTVRRRMMMQSGRKGADIMYTGTVDCWRKIAKDEGPKAFFKG. Position 235 (Arg235) interacts with ADP. Residues 235–240 form an important for transport activity region; sequence RRRMMM. The short motif at 235–240 is the Nucleotide carrier signature motif element; that stretch reads RRRMMM. Lys245 and Lys272 each carry N6-succinyllysine. A helical membrane pass occupies residues 274-291; the sequence is AWSNVLRGMGGAFVLVLY. Residues 292-298 lie on the Mitochondrial intermembrane side of the membrane; that stretch reads DEIKKFV.

The protein belongs to the mitochondrial carrier (TC 2.A.29) family. As to quaternary structure, monomer. Found in a complex with ARL2, ARL2BP and SLC25A4/ANT1. Interacts with ARL2BP. Interacts with TIMM44; leading to inhibit the presequence translocase TIMM23, thereby promoting stabilization of PINK1. Post-translationally, under cell death induction, transglutaminated by TGM2. Transglutamination leads to formation of covalent cross-links between a glutamine and the epsilon-amino group of a lysine residue, forming polymers. In terms of tissue distribution, detected in heart muscle (at protein level). Detected in heart.

Its subcellular location is the mitochondrion inner membrane. It localises to the membrane. It catalyses the reaction ADP(in) + ATP(out) = ADP(out) + ATP(in). The catalysed reaction is H(+)(in) = H(+)(out). With respect to regulation, the matrix-open state (m-state) is inhibited by the membrane-permeable bongkrekic acid (BKA). The cytoplasmic-open state (c-state) is inhibited by the membrane-impermeable toxic inhibitor carboxyatractyloside (CATR). Proton transporter activity is inhibited by ADP:ATP antiporter activity. ADP:ATP antiporter that mediates import of ADP into the mitochondrial matrix for ATP synthesis, and export of ATP out to fuel the cell. Cycles between the cytoplasmic-open state (c-state) and the matrix-open state (m-state): operates by the alternating access mechanism with a single substrate-binding site intermittently exposed to either the cytosolic (c-state) or matrix (m-state) side of the inner mitochondrial membrane. In addition to its ADP:ATP antiporter activity, also involved in mitochondrial uncoupling and mitochondrial permeability transition pore (mPTP) activity. Plays a role in mitochondrial uncoupling by acting as a proton transporter: proton transport uncouples the proton flows via the electron transport chain and ATP synthase to reduce the efficiency of ATP production and cause mitochondrial thermogenesis. Proton transporter activity is inhibited by ADP:ATP antiporter activity, suggesting that SLC25A4/ANT1 acts as a master regulator of mitochondrial energy output by maintaining a delicate balance between ATP production (ADP:ATP antiporter activity) and thermogenesis (proton transporter activity). Proton transporter activity requires free fatty acids as cofactor, but does not transport it. Probably mediates mitochondrial uncoupling in tissues that do not express UCP1. Also plays a key role in mPTP opening, a non-specific pore that enables free passage of the mitochondrial membranes to solutes of up to 1.5 kDa, and which contributes to cell death. It is however unclear if SLC25A4/ANT1 constitutes a pore-forming component of mPTP or regulates it. Acts as a regulator of mitophagy independently of ADP:ATP antiporter activity: promotes mitophagy via interaction with TIMM44, leading to inhibit the presequence translocase TIMM23, thereby promoting stabilization of PINK1. The polypeptide is ADP/ATP translocase 1 (Bos taurus (Bovine)).